We begin with the raw amino-acid sequence, 311 residues long: Putative UPF0607 protein ENSP00000382826 (311 aa).

Over residues 48-61 the composition is skewed to basic and acidic residues; the sequence is AEEPKEATEVKDQV. Disordered stretches follow at residues 48 to 99, 186 to 229, and 291 to 311; these read AEEP…WYNP, GLLM…PLQL, and RKQL…GSCL. Residues 78–97 are compositionally biased toward polar residues; it reads EAASTSRPLETQGNLTSSWY. Basic residues-rich tracts occupy residues 213–222 and 291–305; these read AGHRSRKRKL and RKQL…RQGR.

The protein belongs to the UPF0607 family.

The sequence is that of Putative UPF0607 protein ENSP00000382826 from Homo sapiens (Human).